The sequence spans 845 residues: Beta-mannosidase B (845 aa).

A glycan (N-linked (GlcNAc...) asparagine) is linked at Asn-252. Glu-432 functions as the Proton donor in the catalytic mechanism. 2 N-linked (GlcNAc...) asparagine glycosylation sites follow: Asn-717 and Asn-723.

The protein belongs to the glycosyl hydrolase 2 family. Beta-mannosidase B subfamily.

The catalysed reaction is Hydrolysis of terminal, non-reducing beta-D-mannose residues in beta-D-mannosides.. The protein operates within glycan metabolism; N-glycan degradation. Functionally, exoglycosidase that cleaves the single beta-linked mannose residue from the non-reducing end of beta-mannosidic oligosaccharides of various complexity and length. Prefers mannobiose over mannotriose and has no activity against polymeric mannan. Is also severely restricted by galactosyl substitutions at the +1 subsite. This Aspergillus fumigatus (strain ATCC MYA-4609 / CBS 101355 / FGSC A1100 / Af293) (Neosartorya fumigata) protein is Beta-mannosidase B (mndB).